The primary structure comprises 187 residues: Cytochrome b-245 chaperone 1 (187 aa).

Residues 20–42 form a helical membrane-spanning segment; it reads GIRSWSLLVGILSTGLAAAYYSG. Residues 167 to 187 are disordered; that stretch reads ESPSERSQSSDSEPDGPGGQS. Residues Ser168 and Ser170 each carry the phosphoserine modification.

This sequence belongs to the CYBC1 family. Interacts with CYBB; CYBC1 may act as a chaperone stabilizing Cytochrome b-245 heterodimer.

The protein localises to the endoplasmic reticulum membrane. Functionally, functions as a chaperone necessary for a stable expression of the CYBA and CYBB subunits of the cytochrome b-245 heterodimer. Controls the phagocyte respiratory burst and is essential for innate immunity. This chain is Cytochrome b-245 chaperone 1, found in Mus musculus (Mouse).